A 708-amino-acid chain; its full sequence is ATP-dependent RNA helicase laf-1 (708 aa).

Residues methionine 1–arginine 21 show a composition bias toward low complexity. Residues methionine 1–glycine 191 are disordered. Gly residues predominate over residues glycine 48–aspartate 70. 2 stretches are compositionally biased toward basic and acidic residues: residues glycine 72–arginine 83 and glycine 90–glycine 99. The span at tyrosine 100–tyrosine 123 shows a compositional bias: gly residues. Residues serine 231 to lysine 259 carry the Q motif motif. A Helicase ATP-binding domain is found at isoleucine 262–phenylalanine 453. Alanine 275–threonine 282 is an ATP binding site. The short motif at aspartate 397–aspartate 400 is the DEAD box element. One can recognise a Helicase C-terminal domain in the interval asparagine 465–serine 626. The interval glutamate 623 to serine 708 is disordered. Gly residues-rich tracts occupy residues arginine 630 to phenylalanine 647 and glycine 656 to arginine 692. A compositionally biased stretch (polar residues) spans arginine 699–serine 708.

It belongs to the DEAD box helicase family. DDX3/DED1 subfamily. Binds RNA as a monomer at low laf-1 concentrations and as a dimer at high laf-1 concentrations. In terms of tissue distribution, expressed in the germline and soma of young adult hermaphrodites.

The protein resides in the cytoplasm. The protein localises to the cytoplasmic granule. It localises to the nucleus. It is found in the stress granule. Its subcellular location is the inflammasome. The protein resides in the cell membrane. The protein localises to the cell projection. It localises to the lamellipodium. It catalyses the reaction ATP + H2O = ADP + phosphate + H(+). Functionally, multifunctional ATP-dependent RNA helicase. Plays a role in RNA remodeling, but is not required for RNA unwinding. Binds to RNA in a concentration-dependent manner to stimulate annealing between two complementary strands of RNA. This process is also dependent upon ATP; ATP reduces binding to RNA and subsequently diminishes RNA annealing. Involved in many cellular processes, which do not necessarily require its ATPase/helicase catalytic activities. Involved in the regulation of transcription and translation initiation. Involved in innate immunity. Involved in both stress and inflammatory responses. Promotes liquid-liquid phase separation of P granules, which is a process important for intracellular organization and stress granule assembly. Required for embryonic development. Plays a role in sexual cell fate determination by negatively regulating the translation of the sex determining protein tra-2. May play a protective role in the response to heat and oxidative stress. May negatively regulate extrinsic apoptotic signaling pathway via death domain receptors. May be involved in mitotic chromosome segregation. This is ATP-dependent RNA helicase laf-1 from Caenorhabditis elegans.